Reading from the N-terminus, the 609-residue chain is Glutamine--fructose-6-phosphate aminotransferase [isomerizing] (609 aa).

The active-site Nucleophile; for GATase activity is C2. Residues 2–218 (CGIVGAIAQR…EGDIAEITRR (217 aa)) enclose the Glutamine amidotransferase type-2 domain. 2 SIS domains span residues 286 to 426 (ADEL…LKGL) and 458 to 599 (LAED…VDQP). K604 acts as the For Fru-6P isomerization activity in catalysis.

As to quaternary structure, homodimer. In pull-down experiments interacts with CedA.

Its subcellular location is the cytoplasm. The catalysed reaction is D-fructose 6-phosphate + L-glutamine = D-glucosamine 6-phosphate + L-glutamate. Catalyzes the first step in hexosamine metabolism, converting fructose-6P into glucosamine-6P using glutamine as a nitrogen source. The protein is Glutamine--fructose-6-phosphate aminotransferase [isomerizing] (glmS) of Escherichia coli (strain K12).